The primary structure comprises 378 residues: tRNA (guanine(26)-N(2))-dimethyltransferase (378 aa).

The Trm1 methyltransferase domain occupies 4–374 (KEVTEGKVRI…KGYEEIIRCV (371 aa)). 5 residues coordinate S-adenosyl-L-methionine: Arg-44, Arg-69, Asp-87, Asp-114, and Ala-115. 4 residues coordinate Zn(2+): Cys-246, Cys-249, Cys-263, and Cys-266.

It belongs to the class I-like SAM-binding methyltransferase superfamily. Trm1 family.

The catalysed reaction is guanosine(26) in tRNA + 2 S-adenosyl-L-methionine = N(2)-dimethylguanosine(26) in tRNA + 2 S-adenosyl-L-homocysteine + 2 H(+). Its function is as follows. Dimethylates a single guanine residue at position 26 of a number of tRNAs using S-adenosyl-L-methionine as donor of the methyl groups. The protein is tRNA (guanine(26)-N(2))-dimethyltransferase of Saccharolobus islandicus (strain M.14.25 / Kamchatka #1) (Sulfolobus islandicus).